The chain runs to 304 residues: Hairy/enhancer-of-split related with YRPW motif protein 1 (304 aa).

The segment at 1 to 52 (MKRAHPDYSSSDSELDETVEVEKESADENGNLSSALGSMSPTTSSQILARKR) is disordered. Over residues 28–47 (ENGNLSSALGSMSPTTSSQI) the composition is skewed to polar residues. The segment at 48–117 (LARKRRRGII…GGKGYFDAHA (70 aa)) is transcriptional repression and interaction with NCOR1 and SIN3A. In terms of domain architecture, bHLH spans 49-104 (ARKRRRGIIEKRRRDRINNSLSELRRLVPSAFEKQGSAKLEKAEILQMTVDHLKML). Residues 122–158 (YRSLGFRECLAEVARYLSIIEGLDASDPLRVRLVSHL) form the Orange domain. The interval 191–234 (AHPLLLPQSGHGNTGTSASPTDPHHQGRLAAAHPEAPALRAPPS) is disordered. The span at 200–210 (GHGNTGTSASP) shows a compositional bias: polar residues. Positions 218 to 234 (RLAAAHPEAPALRAPPS) are enriched in low complexity.

The protein belongs to the HEY family. In terms of assembly, self-associates. Interacts with HES1 and HEYL. Interacts with HDAC1, NCOR1 and SIN3A. Interacts with GATA4 and GATA6. Interacts with CCDC89/BOIP.

It is found in the nucleus. Functionally, transcriptional repressor which binds preferentially to the canonical E box sequence 5'-CACGTG-3'. Downstream effector of Notch signaling required for cardiovascular development. Specifically required for the Notch-induced endocardial epithelial to mesenchymal transition, which is itself criticial for cardiac valve and septum development. May be required in conjunction with HEY2 to specify arterial cell fate or identity. Promotes maintenance of neuronal precursor cells and glial versus neuronal fate specification. Represses transcription by the cardiac transcriptional activators GATA4 and GATA6 and by the neuronal bHLH factors ASCL1/MASH1 and NEUROD4/MATH3. The protein is Hairy/enhancer-of-split related with YRPW motif protein 1 (HEY1) of Canis lupus familiaris (Dog).